The following is a 627-amino-acid chain: Ski protein homolog (627 aa).

Positions 1–12 are enriched in polar residues; the sequence is MSDSPIGSSQQV. 3 disordered regions span residues 1-22, 34-58, and 299-318; these read MSDS…PDLM, LHEE…KDSR, and EYDE…METP.

Belongs to the SKI family. In terms of assembly, may interact with daf-3. Expressed in ganglia in the head and tail and in the anterior pharynx.

The protein localises to the nucleus. Its function is as follows. Probable component of transcriptional regulatory complex with SMAD protein daf-3. Required to regulate entry into a developmentally arrested larval state known as dauer, in response to harsh environmental conditions. Involved in larvae undergoing cell-cycle arrest during the dauer stage. The sequence is that of Ski protein homolog from Caenorhabditis elegans.